The following is a 338-amino-acid chain: RNA 3'-terminal phosphate cyclase (338 aa).

Residues Gln-103 and 283-287 (YLADQ) each bind ATP. His-308 acts as the Tele-AMP-histidine intermediate in catalysis.

This sequence belongs to the RNA 3'-terminal cyclase family. Type 1 subfamily.

Its subcellular location is the cytoplasm. It catalyses the reaction a 3'-end 3'-phospho-ribonucleotide-RNA + ATP = a 3'-end 2',3'-cyclophospho-ribonucleotide-RNA + AMP + diphosphate. Functionally, catalyzes the conversion of 3'-phosphate to a 2',3'-cyclic phosphodiester at the end of RNA. The mechanism of action of the enzyme occurs in 3 steps: (A) adenylation of the enzyme by ATP; (B) transfer of adenylate to an RNA-N3'P to produce RNA-N3'PP5'A; (C) and attack of the adjacent 2'-hydroxyl on the 3'-phosphorus in the diester linkage to produce the cyclic end product. The biological role of this enzyme is unknown but it is likely to function in some aspects of cellular RNA processing. In Escherichia coli O6:H1 (strain CFT073 / ATCC 700928 / UPEC), this protein is RNA 3'-terminal phosphate cyclase.